A 362-amino-acid polypeptide reads, in one-letter code: Methionine import ATP-binding protein MetN (362 aa).

Positions 23 to 258 constitute an ABC transporter domain; the sequence is VRLTDVKRRF…PQAEITGSLL (236 aa). 55 to 62 provides a ligand contact to ATP; sequence GRSGAGKS.

This sequence belongs to the ABC transporter superfamily. Methionine importer (TC 3.A.1.24) family. The complex is composed of two ATP-binding proteins (MetN), two transmembrane proteins (MetI) and a solute-binding protein (MetQ).

It is found in the cell inner membrane. It carries out the reaction L-methionine(out) + ATP + H2O = L-methionine(in) + ADP + phosphate + H(+). The enzyme catalyses D-methionine(out) + ATP + H2O = D-methionine(in) + ADP + phosphate + H(+). Part of the ABC transporter complex MetNIQ involved in methionine import. Responsible for energy coupling to the transport system. The protein is Methionine import ATP-binding protein MetN of Rhizobium johnstonii (strain DSM 114642 / LMG 32736 / 3841) (Rhizobium leguminosarum bv. viciae).